The primary structure comprises 349 residues: N-acetyl-gamma-glutamyl-phosphate reductase (349 aa).

Cysteine 153 is an active-site residue.

It belongs to the NAGSA dehydrogenase family. Type 1 subfamily.

The protein resides in the cytoplasm. It catalyses the reaction N-acetyl-L-glutamate 5-semialdehyde + phosphate + NADP(+) = N-acetyl-L-glutamyl 5-phosphate + NADPH + H(+). It functions in the pathway amino-acid biosynthesis; L-arginine biosynthesis; N(2)-acetyl-L-ornithine from L-glutamate: step 3/4. Functionally, catalyzes the NADPH-dependent reduction of N-acetyl-5-glutamyl phosphate to yield N-acetyl-L-glutamate 5-semialdehyde. The protein is N-acetyl-gamma-glutamyl-phosphate reductase of Magnetococcus marinus (strain ATCC BAA-1437 / JCM 17883 / MC-1).